Reading from the N-terminus, the 330-residue chain is Ferrochelatase (330 aa).

Positions 200 and 281 each coordinate Fe cation.

It belongs to the ferrochelatase family.

It is found in the cytoplasm. The catalysed reaction is heme b + 2 H(+) = protoporphyrin IX + Fe(2+). Its pathway is porphyrin-containing compound metabolism; protoheme biosynthesis; protoheme from protoporphyrin-IX: step 1/1. Its function is as follows. Catalyzes the ferrous insertion into protoporphyrin IX. The chain is Ferrochelatase from Marinomonas sp. (strain MWYL1).